The following is a 380-amino-acid chain: NADPH oxidoreductase (380 aa).

An FAD-binding FR-type domain is found at 58–164 (ARELRGRILG…AAPQGNFVLP (107 aa)). A 2Fe-2S ferredoxin-type domain is found at 299–380 (GTVTFARSGK…AASGDCVLDI (82 aa)). The [2Fe-2S] cluster site is built by C333, C338, C341, and C368.

In terms of assembly, interacts with DesA3 to form a functional acyl-CoA desaturase complex. It depends on [2Fe-2S] cluster as a cofactor. FAD serves as cofactor.

It is found in the cell membrane. It participates in lipid metabolism; fatty acid metabolism. Functionally, is likely involved in the aerobic desaturation system responsible for the synthesis of oleic acid from stearoyl-CoA; oleic acid is a precursor of mycobacterial membrane phospholipids and triglycerides. Is the electron transfer partner for the stearoyl-CoA 9-desaturase DesA3. Catalyzes electron transfer reaction between NADPH and the diiron center of DesA3. Cannot use NADH. This Mycobacterium tuberculosis (strain ATCC 25618 / H37Rv) protein is NADPH oxidoreductase.